Here is a 453-residue protein sequence, read N- to C-terminus: UDP-N-acetylmuramoylalanine--D-glutamate ligase (453 aa).

119-125 (GSNGKTT) contributes to the ATP binding site.

This sequence belongs to the MurCDEF family.

It is found in the cytoplasm. It carries out the reaction UDP-N-acetyl-alpha-D-muramoyl-L-alanine + D-glutamate + ATP = UDP-N-acetyl-alpha-D-muramoyl-L-alanyl-D-glutamate + ADP + phosphate + H(+). The protein operates within cell wall biogenesis; peptidoglycan biosynthesis. Cell wall formation. Catalyzes the addition of glutamate to the nucleotide precursor UDP-N-acetylmuramoyl-L-alanine (UMA). This is UDP-N-acetylmuramoylalanine--D-glutamate ligase from Streptococcus uberis (strain ATCC BAA-854 / 0140J).